The sequence spans 238 residues: Thrombin-like enzyme AhV_TL-I (238 aa).

Residues 1 to 229 enclose the Peptidase S1 domain; the sequence is IIGGDECNIN…HLDWIENIIA (229 aa). Cystine bridges form between C7/C141, C28/C44, C76/C236, C120/C190, C152/C169, and C180/C205. Residue H43 is the Charge relay system of the active site. An N-linked (GlcNAc...) asparagine glycan is attached at N81. D88 functions as the Charge relay system in the catalytic mechanism. S184 functions as the Charge relay system in the catalytic mechanism.

Belongs to the peptidase S1 family. Snake venom subfamily. In terms of assembly, monomer. In terms of processing, N-glycosylated at Asn-81 by a disaccharide composed of two N-acetylglucosamine (NAG). The presence of this N-glycan deforms the enzyme and Removing the carbohydrate moiety increases the esterase activity, but induces a complete loss of contractile response on mouse thoracic aorta. Expressed by the venom gland.

The protein resides in the secreted. With respect to regulation, inhibited by PMSF, L-cysteine and partially by SBTI and leupeptin. Thrombin-like enzyme that shows fibrinogenolytic activity against both the Aalpha (FGA) and Bbeta (FGB) chains of bovine fibrinogen. This enzyme has poor esterolytic activity upon BAEE substrate. It induces mouse thoracic aortic ring contraction with EC(50)=147 nmol/L. It shows vasoconstrictor effects that are independent of the enzymatic activity, but related to the release of calcium ions form the calcium store, potentially through the activation of ryanodine receptors. This is Thrombin-like enzyme AhV_TL-I from Gloydius halys (Chinese water mocassin).